The primary structure comprises 466 residues: Exodeoxyribonuclease 7 large subunit (466 aa).

This sequence belongs to the XseA family. As to quaternary structure, heterooligomer composed of large and small subunits.

It localises to the cytoplasm. The enzyme catalyses Exonucleolytic cleavage in either 5'- to 3'- or 3'- to 5'-direction to yield nucleoside 5'-phosphates.. Bidirectionally degrades single-stranded DNA into large acid-insoluble oligonucleotides, which are then degraded further into small acid-soluble oligonucleotides. The protein is Exodeoxyribonuclease 7 large subunit of Vesicomyosocius okutanii subsp. Calyptogena okutanii (strain HA).